The primary structure comprises 473 residues: H(+)/Cl(-) exchange transporter ClcA (473 aa).

Residues M1–P32 are Cytoplasmic-facing. The helical transmembrane segment at L33–V69 threads the bilayer. Residues Q70 to F76 are Periplasmic-facing. The chain crosses the membrane as a helical span at residues L77–F100. A Selectivity filter part_1 motif is present at residues G106 to P110. S107 contacts chloride. An intramembrane region (helical) is located at residues I109–L116. Residues E117 to R123 lie on the Cytoplasmic side of the membrane. The next 2 helical transmembrane spans lie at W124–A141 and E148–F166. The Selectivity filter part_2 signature appears at G146 to P150. Topologically, residues R167 to T176 are cytoplasmic. 2 intramembrane regions (helical) span residues L177–A189 and P193–I201. Residues E202–S214 are Cytoplasmic-facing. Residues I215 to F232 traverse the membrane as a helical segment. The Periplasmic segment spans residues N233–L252. Residues W253–Q281 traverse the membrane as a helical segment. The Cytoplasmic portion of the chain corresponds to R282 to E287. The helical transmembrane segment at I288–E309 threads the bilayer. Over P310–S329 the chain is Periplasmic. The next 2 membrane-spanning stretches (helical) occupy residues V330–S349 and G355–A376. A Selectivity filter part_3 motif is present at residues G355 to P359. Residues I356 and F357 each coordinate chloride. At V377–A386 the chain is on the periplasmic side. The helical intramembrane region spans G387–S401. An intramembrane region (note=Loop between two helices) is located at residues V402–A404. An intramembrane region (helical) is located at residues P405–T416. An intramembrane region (note=Loop between two helices) is located at residues D417–L421. Residues I422–F438 traverse the membrane as a helical segment. The Cytoplasmic portion of the chain corresponds to L439 to T473. Y445 provides a ligand contact to chloride.

Belongs to the chloride channel (TC 2.A.49) family. ClcA subfamily. In terms of assembly, homodimer.

The protein localises to the cell inner membrane. It carries out the reaction 2 chloride(in) + H(+)(out) = 2 chloride(out) + H(+)(in). Its function is as follows. Proton-coupled chloride transporter. Functions as antiport system and exchanges two chloride ions for 1 proton. Probably acts as an electrical shunt for an outwardly-directed proton pump that is linked to amino acid decarboxylation, as part of the extreme acid resistance (XAR) response. This Salmonella typhi protein is H(+)/Cl(-) exchange transporter ClcA.